The primary structure comprises 433 residues: E3 ubiquitin-protein ligase RNF26 (433 aa).

A run of 5 helical transmembrane segments spans residues 24–44 (LNFLLVSSLLASLAWLLAFVY), 60–80 (GVLLSLLALIEAVVRFTCGGL), 147–169 (VINSLVNICLIGTQNLFSLVLAL), 183–203 (VVAAFLAHISSSAVAMAILLW), and 220–240 (LASFVLVNLTGLVLLACVLAV). The RING-type zinc-finger motif lies at 380 to 422 (CVICQDQSKTVLLLPCRHLCLCQACTEILMRHPVYHRNCPLCR).

Interacts with INCA1. Interacts with TMEM43, ENDOD1, TMEM33 and TMED1 to form a complex capable of modulating innate immune signaling through the cGAS-STING pathway. Interacts with UBE2J1; this interaction is important for SQSTM1 ubiquitination. In terms of tissue distribution, ubiquitous. Up-regulated in several cancer cell lines.

Its subcellular location is the endoplasmic reticulum membrane. It catalyses the reaction S-ubiquitinyl-[E2 ubiquitin-conjugating enzyme]-L-cysteine + [acceptor protein]-L-lysine = [E2 ubiquitin-conjugating enzyme]-L-cysteine + N(6)-ubiquitinyl-[acceptor protein]-L-lysine.. Its pathway is protein modification; protein ubiquitination. E3 ubiquitin-protein ligase that plays a key role in endosome organization by retaining vesicles in the perinuclear cloud. Acts as a platform for perinuclear positioning of the endosomal system by mediating ubiquitination of SQSTM1 through interaction with the ubiquitin conjugating enzyme UBE2J1. Ubiquitinated SQSTM1 attracts specific vesicle-associated adapters, forming a molecular bridge that restrains cognate vesicles in the perinuclear region and organizes the endosomal pathway for efficient cargo transport. Also acts as a regulator of type I interferon production in response to viral infection by mediating the formation of 'Lys-11'-linked polyubiquitin chains on TMEM173/STING, leading to stabilize TMEM173/STING. Also required to limit type I interferon response by promoting autophagic degradation of IRF3. The polypeptide is E3 ubiquitin-protein ligase RNF26 (Homo sapiens (Human)).